The primary structure comprises 359 residues: Protein HEXIM1 (359 aa).

The interval 1–163 (MAEPFLSEYQ…RRRPSKKKRH (163 aa)) is disordered. Polar residues predominate over residues 9–19 (YQHQPQTSNCT). Composition is skewed to basic and acidic residues over residues 34 to 47 (PGAE…DSRW) and 84 to 93 (CLREGEKGQN). Phosphoserine is present on residues Ser97 and Ser98. The span at 148–163 (LGKKKHRRRPSKKKRH) shows a compositional bias: basic residues. A basic region; mediates nuclear localization and interaction with 7SK snRNA and NR3C1 region spans residues 150 to 177 (KKKHRRRPSKKKRHWKPYYKLTWEEKKK). An interaction with P-TEFb region spans residues 202–205 (PYNT). The interval 210–250 (MDDHDQEEPDLKTGLYSKRAAAKSDDTSDDDFMEEGGEEDG) is autoinhibitory acidic region; in absence of 7SK snRNA interacts with the basic region preventing interaction with P-TEFb and modulating subcellular localization. The segment at 213–262 (HDQEEPDLKTGLYSKRAAAKSDDTSDDDFMEEGGEEDGGSDGMGGDGSEF) is disordered. Position 233 is a phosphoserine (Ser233). A Phosphothreonine modification is found at Thr236. The span at 236 to 251 (TSDDDFMEEGGEEDGG) shows a compositional bias: acidic residues. Ser237, Ser252, and Ser260 each carry phosphoserine. Residues 283–349 (SKQELIKEYL…LTENELHRQQ (67 aa)) are a coiled coil. Residues 286–314 (ELIKEYLELEKCLSRMEDENNRLRLESKR) form a mediates interaction with CCNT1 region. The required for inhibition of ESR1-dependent transcription stretch occupies residues 310 to 355 (LESKRLGGDDARVRELELELDRLRAENLQLLTENELHRQQERAPLS).

It belongs to the HEXIM family. As to quaternary structure, homooligomer and heterooligomer with HEXIM2; probably dimeric. Core component of the 7SK RNP complex, at least composed of 7SK RNA, LARP7, MEPCE, HEXIM1 (or HEXIM2) and P-TEFb (composed of CDK9 and CCNT1/cyclin-T1). Interacts with the N-CoR complex through NCOR1. Interacts with ESR1 and NR3C1. May interact with NF-kappa-B through RELA. Interacts with CCNT2; mediates formation of a tripartite complex with KPNA2. Part of the HDP-RNP complex composed of at least HEXIM1, PRKDC, XRCC5, XRCC6, paraspeckle proteins (SFPQ, NONO, PSPC1, RBM14, and MATR3) and NEAT1 non-coding RNA. As to expression, ubiquitously expressed with higher expression in placenta. HEXIM1 and HEXIM2 are differentially expressed. Expressed in endocrine tissues.

The protein resides in the nucleus. It localises to the cytoplasm. Transcriptional regulator which functions as a general RNA polymerase II transcription inhibitor. Core component of the 7SK RNP complex: in cooperation with 7SK snRNA sequesters P-TEFb in a large inactive 7SK snRNP complex preventing RNA polymerase II phosphorylation and subsequent transcriptional elongation. May also regulate NF-kappa-B, ESR1, NR3C1 and CIITA-dependent transcriptional activity. Plays a role in the regulation of DNA virus-mediated innate immune response by assembling into the HDP-RNP complex, a complex that serves as a platform for IRF3 phosphorylation and subsequent innate immune response activation through the cGAS-STING pathway. This is Protein HEXIM1 (HEXIM1) from Homo sapiens (Human).